The chain runs to 643 residues: Clathrin interactor 1 (643 aa).

Positions 16–149 (NVVMNYSEIE…QDDDRLREER (134 aa)) constitute an ENTH domain. R29 serves as a coordination point for a 1,2-diacyl-sn-glycero-3-phospho-(1D-myo-inositol-4,5-bisphosphate). Residues 52–54 (FMY) are interaction with VTI1B. Residue R67 coordinates a 1,2-diacyl-sn-glycero-3-phospho-(1D-myo-inositol-4,5-bisphosphate). 2 interaction with VTI1B regions span residues 94 to 96 (SER) and 142 to 153 (DDRLREERKKAK). S163, S166, S173, S205, S210, S227, S245, and S299 each carry phosphoserine. Residues 219-331 (FRRKDREDSP…SSGDLVDLFD (113 aa)) are disordered. A compositionally biased stretch (basic and acidic residues) spans 222–239 (KDREDSPERCSDSDEEKK). Over residues 300–310 (PDQNASTHTPQ) the composition is skewed to polar residues. T308 bears the Phosphothreonine mark. Over residues 311 to 323 (SSLKTSVPSSKSS) the composition is skewed to low complexity. 2 positions are modified to phosphoserine: S312 and S642.

It belongs to the epsin family. As to quaternary structure, binds clathrin heavy chain and AP-2. Interacts with VTI1B. Interacts with GGA2 (via GAE domain). Interacts with AP1G1 (via GAE domain). Interacts with AP1G2 (via GAE domain).

It is found in the cytoplasm. It localises to the perinuclear region. The protein resides in the membrane. Its subcellular location is the cytoplasmic vesicle. The protein localises to the clathrin-coated vesicle. Its function is as follows. Binds to membranes enriched in phosphatidylinositol 4,5-bisphosphate (PtdIns(4,5)P2). May have a role in transport via clathrin-coated vesicles from the trans-Golgi network to endosomes. Stimulates clathrin assembly. This Bos taurus (Bovine) protein is Clathrin interactor 1 (CLINT1).